Reading from the N-terminus, the 722-residue chain is Metal transporter cnnm-5 (722 aa).

An N-terminal signal peptide occupies residues 1–17; that stretch reads MSLFLFAIFQLALGSPG. At 18–139 the chain is on the extracellular side; the sequence is APNGPNVPLQ…AAAAKYMGDE (122 aa). Asn102 and Asn114 each carry an N-linked (GlcNAc...) asparagine glycan. A CNNM transmembrane domain is found at 132–318; the sequence is AAKYMGDEIV…AQNEREKTIL (187 aa). The helical transmembrane segment at 140–160 threads the bilayer; the sequence is IVFCFFCILMSAYASGMTLGY. The Cytoplasmic segment spans residues 161–196; that stretch reads MKFSMIDLNTMLKIAEGDAAKKRVRRIMHFRRRSTQ. A helical membrane pass occupies residues 197-217; sequence LVVTFSLFSSVFTVLFTTTCE. Over 218–227 the chain is Extracellular; it reads KMLHGVSNED. Residues 228 to 248 traverse the membrane as a helical segment; the sequence is VLKMAVPALICLIFAEMIPQA. Over 249–257 the chain is Cytoplasmic; that stretch reads VCNSKFGFN. The chain crosses the membrane as a helical span at residues 258-278; it reads LAASLWFVTVIIFFVTLPIAY. Topologically, residues 279 to 722 are extracellular; sequence PASLVLGRFL…ETTPFMEKQE (444 aa). Asn320, Asn349, and Asn371 each carry an N-linked (GlcNAc...) asparagine glycan. CBS domains lie at 333–396 and 413–473; these read MVPI…LIDE and TVKF…KIDE. Residues 584–607 are disordered; it reads SQRSSSTVNSQQHRQQTTDNSRST. Asn639 carries N-linked (GlcNAc...) asparagine glycosylation. The interval 686-722 is disordered; it reads LNSRASTSTSTTPACRTPLSVDARSQDETTPFMEKQE. A compositionally biased stretch (low complexity) spans 688-703; it reads SRASTSTSTTPACRTP.

The protein belongs to the ACDP family.

Its subcellular location is the cell membrane. Functionally, probable metal transporter. Probably acts redundantly with the other metal transport proteins cnnm-1, cnnm-2, cnnm-3 and cnnm-4 to regulate Mg(2+) homeostasis. In Caenorhabditis elegans, this protein is Metal transporter cnnm-5.